We begin with the raw amino-acid sequence, 803 residues long: Translation initiation factor IF-2 (803 aa).

Disordered regions lie at residues 93-123 (TKPV…LNEK) and 138-206 (EVKE…ASAK). The segment covering 111 to 121 (VPPTSDTTNLN) has biased composition (polar residues). The segment covering 138–155 (EVKEEAKKTPSEKKETPK) has biased composition (basic and acidic residues). Positions 156-167 (KGPRKETRRSRK) are enriched in basic residues. Over residues 168-188 (PDKEDKWEREELHMTKLVEER) the composition is skewed to basic and acidic residues. The tr-type G domain maps to 302–471 (PRAPVVTIMG…LLQAEVLELK (170 aa)). A G1 region spans residues 311-318 (GHVDHGKT). 311–318 (GHVDHGKT) provides a ligand contact to GTP. A G2 region spans residues 336 to 340 (GITQH). The segment at 357-360 (DTPG) is G3. GTP-binding positions include 357–361 (DTPGH) and 411–414 (NKID). The segment at 411–414 (NKID) is G4. Residues 447–449 (SAK) are G5.

The protein belongs to the TRAFAC class translation factor GTPase superfamily. Classic translation factor GTPase family. IF-2 subfamily.

The protein resides in the cytoplasm. Functionally, one of the essential components for the initiation of protein synthesis. Protects formylmethionyl-tRNA from spontaneous hydrolysis and promotes its binding to the 30S ribosomal subunits. Also involved in the hydrolysis of GTP during the formation of the 70S ribosomal complex. The protein is Translation initiation factor IF-2 of Coxiella burnetii (strain RSA 493 / Nine Mile phase I).